Here is a 280-residue protein sequence, read N- to C-terminus: Tryptophan synthase alpha chain (280 aa).

Catalysis depends on proton acceptor residues Glu50 and Asp61.

This sequence belongs to the TrpA family. In terms of assembly, tetramer of two alpha and two beta chains.

It catalyses the reaction (1S,2R)-1-C-(indol-3-yl)glycerol 3-phosphate + L-serine = D-glyceraldehyde 3-phosphate + L-tryptophan + H2O. It functions in the pathway amino-acid biosynthesis; L-tryptophan biosynthesis; L-tryptophan from chorismate: step 5/5. The alpha subunit is responsible for the aldol cleavage of indoleglycerol phosphate to indole and glyceraldehyde 3-phosphate. This is Tryptophan synthase alpha chain from Methylorubrum extorquens (strain CM4 / NCIMB 13688) (Methylobacterium extorquens).